Reading from the N-terminus, the 159-residue chain is UPF0262 protein TM1040_3562 (159 aa).

The segment at 1 to 21 (MSRISQIELDDRNLPPPTPEI) is disordered.

The protein belongs to the UPF0262 family.

This chain is UPF0262 protein TM1040_3562, found in Ruegeria sp. (strain TM1040) (Silicibacter sp.).